The sequence spans 603 residues: Pyruvate decarboxylase 4 (603 aa).

Residues aspartate 65 and histidine 152 each coordinate substrate. The thiamine pyrophosphate binding stretch occupies residues 430 to 512; the sequence is DSWFNCQKLK…FLINNGGYTI (83 aa). 3 residues coordinate Mg(2+): aspartate 480, asparagine 507, and glycine 509. Glutamate 513 lines the substrate pocket.

This sequence belongs to the TPP enzyme family. Homotetramer. A metal cation is required as a cofactor. It depends on thiamine diphosphate as a cofactor. In terms of tissue distribution, expressed in shoots and at lowe levels in roots, flowers and siliques.

It carries out the reaction a 2-oxocarboxylate + H(+) = an aldehyde + CO2. The sequence is that of Pyruvate decarboxylase 4 (PDC4) from Arabidopsis thaliana (Mouse-ear cress).